A 182-amino-acid chain; its full sequence is MDLSSLRPAKGAVKNKKRIGRGPGSGNGTTAGKGNKGQQSRSGYTRPVSEGGQMPIYRRLPKFGFTKPNRKNVIPVNLSQIALWMENGKATSEITVENLKSLCSARRADYFKILGNGELKSPVTITAHFVSKSAQEKILQAGGTITLAERTLLEAERIKDTPVEEGLMKPKARLRKKKKIKS.

Positions 1-52 (MDLSSLRPAKGAVKNKKRIGRGPGSGNGTTAGKGNKGQQSRSGYTRPVSEGG) are disordered. The segment covering 21–35 (RGPGSGNGTTAGKGN) has biased composition (gly residues).

Belongs to the universal ribosomal protein uL15 family. In terms of assembly, part of the 50S ribosomal subunit.

Functionally, binds to the 23S rRNA. This Chlorobium phaeobacteroides (strain BS1) protein is Large ribosomal subunit protein uL15.